Here is a 281-residue protein sequence, read N- to C-terminus: Carbonic anhydrase (281 aa).

Zn(2+) contacts are provided by Cys-106, His-161, and Cys-164.

The protein belongs to the beta-class carbonic anhydrase family. Zn(2+) is required as a cofactor.

The protein localises to the cytoplasm. It is found in the nucleus. The protein resides in the mitochondrion intermembrane space. The enzyme catalyses hydrogencarbonate + H(+) = CO2 + H2O. With respect to regulation, amines and amino acids act as activators of catalytic activity, whereas natural product-based phenols, dithiocarbamates, aliphatic and aromatic carboxylates, boronic acids, and sulfonamides act as inhibitors of enzymatic activity. Also inhibited by anions such as cyanide and carbonate, and to a lesser extent by sulfate, phenylboronic, and phenyl arsonic acid. In terms of biological role, catalyzes the reversible hydration of CO(2) to H(2)CO(3). The main role may be to provide inorganic carbon for the bicarbonate-dependent carboxylation reactions catalyzed by pyruvate carboxylase, acetyl-CoA carboxylase and carbamoyl-phosphate synthetase. Involved in protection against oxidative damage. Acts as a CO(2) chemosensor and induces CO(2)-mediated filamentation. Essential for pathological growth in niches where sufficient CO(2) is not supplied by the host. Necessary for white-to-opaque switching at low CO(2) concentrations. This chain is Carbonic anhydrase (NCE103), found in Candida albicans (strain SC5314 / ATCC MYA-2876) (Yeast).